The chain runs to 89 residues: Cell division topological specificity factor (89 aa).

The protein belongs to the MinE family.

In terms of biological role, prevents the cell division inhibition by proteins MinC and MinD at internal division sites while permitting inhibition at polar sites. This ensures cell division at the proper site by restricting the formation of a division septum at the midpoint of the long axis of the cell. The sequence is that of Cell division topological specificity factor from Desulforudis audaxviator (strain MP104C).